The sequence spans 443 residues: Putative phosphoribosyl transferase MT0597 (443 aa).

This sequence in the N-terminal section; belongs to the purine/pyrimidine phosphoribosyltransferase family. It in the C-terminal section; belongs to the dienelactone hydrolase family.

The chain is Putative phosphoribosyl transferase MT0597 from Mycobacterium tuberculosis (strain CDC 1551 / Oshkosh).